Reading from the N-terminus, the 138-residue chain is Ferredoxin-2 (138 aa).

A 2Fe-2S ferredoxin-type domain is found at 27-117 (ADANLQSTDF…DAKIVYNLKH (91 aa)). Residues Cys62, Cys67, Cys70, and Cys100 each coordinate [2Fe-2S] cluster.

The protein belongs to the 2Fe2S plant-type ferredoxin family. The cofactor is [2Fe-2S] cluster.

In terms of biological role, ferredoxins are iron-sulfur proteins that transfer electrons in a wide variety of metabolic reactions. This chain is Ferredoxin-2 (fer2), found in Haloarcula marismortui (strain ATCC 43049 / DSM 3752 / JCM 8966 / VKM B-1809) (Halobacterium marismortui).